The chain runs to 149 residues: Large ribosomal subunit protein bL9 (149 aa).

It belongs to the bacterial ribosomal protein bL9 family.

Its function is as follows. Binds to the 23S rRNA. The protein is Large ribosomal subunit protein bL9 of Stenotrophomonas maltophilia (strain K279a).